The primary structure comprises 185 residues: TATA-box-binding protein 3 (185 aa).

Repeat copies occupy residues 7–84 (IENV…ANTL) and 100–178 (VQNI…KTEF).

Belongs to the TBP family.

General factor that plays a role in the activation of archaeal genes transcribed by RNA polymerase. Binds specifically to the TATA box promoter element which lies close to the position of transcription initiation. The polypeptide is TATA-box-binding protein 3 (Methanosarcina mazei (strain ATCC BAA-159 / DSM 3647 / Goe1 / Go1 / JCM 11833 / OCM 88) (Methanosarcina frisia)).